Reading from the N-terminus, the 229-residue chain is Ribose-5-phosphate isomerase A (229 aa).

Substrate-binding positions include 28 to 31 (TGST), 85 to 88 (DGAD), and 98 to 101 (KGRG). Glu107 (proton acceptor) is an active-site residue. Lys125 lines the substrate pocket.

It belongs to the ribose 5-phosphate isomerase family. In terms of assembly, homodimer.

It catalyses the reaction aldehydo-D-ribose 5-phosphate = D-ribulose 5-phosphate. The protein operates within carbohydrate degradation; pentose phosphate pathway; D-ribose 5-phosphate from D-ribulose 5-phosphate (non-oxidative stage): step 1/1. Its function is as follows. Catalyzes the reversible conversion of ribose-5-phosphate to ribulose 5-phosphate. This is Ribose-5-phosphate isomerase A from Pyrococcus furiosus (strain ATCC 43587 / DSM 3638 / JCM 8422 / Vc1).